The following is a 306-amino-acid chain: Glutathione transport system permease protein GsiC (306 aa).

Topologically, residues 1-8 are cytoplasmic; sequence MLNYVIKR. The helical transmembrane segment at 9-29 threads the bilayer; sequence LLGLIPTLFIVSVLVFLFVHM. Residues 30–102 lie on the Periplasmic side of the membrane; the sequence is LPGDPARLIA…SRFMPTLWLT (73 aa). The region spanning 95-292 is the ABC transmembrane type-1 domain; it reads FMPTLWLTIT…LEFILINLVV (198 aa). Residues 103–123 traverse the membrane as a helical segment; it reads ITSMVWAVIFGMAAGIIAAVW. At 124-134 the chain is on the cytoplasmic side; that stretch reads RNRWPDRLSMT. Residues 135–155 traverse the membrane as a helical segment; that stretch reads IAVSGISFPAFALGMFLIQVF. The Periplasmic segment spans residues 156–168; that stretch reads SVELGWLPTVGAD. Residues 169 to 189 traverse the membrane as a helical segment; sequence SWQHYILPSLTLGAAVAAVMA. The Cytoplasmic portion of the chain corresponds to 190-228; the sequence is RFTRASFVDVLSEDYMRTARAKGVSETWVVLKHGLRNAM. The helical transmembrane segment at 229–249 threads the bilayer; it reads IPVVTMMGLQFGFLLGGSIVV. The Periplasmic portion of the chain corresponds to 250 to 277; that stretch reads EKVFNWPGLGRLLVDSVEMRDYPVIQAE. Residues 278-298 traverse the membrane as a helical segment; the sequence is ILLFSLEFILINLVVDVLYAA. The Cytoplasmic portion of the chain corresponds to 299–306; sequence INPAIRYK.

This sequence belongs to the binding-protein-dependent transport system permease family. In terms of assembly, the complex is composed of two ATP-binding proteins (GsiA), two transmembrane proteins (GsiC and GsiD) and a solute-binding protein (GsiB).

It localises to the cell inner membrane. In terms of biological role, part of the ABC transporter complex GsiABCD involved in glutathione import. Probably responsible for the translocation of the substrate across the membrane. The sequence is that of Glutathione transport system permease protein GsiC from Shigella flexneri serotype 5b (strain 8401).